Consider the following 160-residue polypeptide: Ribosomal RNA large subunit methyltransferase H (160 aa).

S-adenosyl-L-methionine contacts are provided by residues L76, G108, and 127–132; that span reads FGRMTF.

It belongs to the RNA methyltransferase RlmH family. Homodimer.

The protein resides in the cytoplasm. It catalyses the reaction pseudouridine(1915) in 23S rRNA + S-adenosyl-L-methionine = N(3)-methylpseudouridine(1915) in 23S rRNA + S-adenosyl-L-homocysteine + H(+). Specifically methylates the pseudouridine at position 1915 (m3Psi1915) in 23S rRNA. This Methylocella silvestris (strain DSM 15510 / CIP 108128 / LMG 27833 / NCIMB 13906 / BL2) protein is Ribosomal RNA large subunit methyltransferase H.